The primary structure comprises 86 residues: MNFQPLGKRILVKRLEEMKTTASGIIIPDNAKEKPLNGEVAAVSKEIEDVKVNDKVMFAKYGGTEIKLDNEEYLVLNIEDVLGIIK.

It belongs to the GroES chaperonin family. Heptamer of 7 subunits arranged in a ring. Interacts with the chaperonin GroEL.

The protein localises to the cytoplasm. Together with the chaperonin GroEL, plays an essential role in assisting protein folding. The GroEL-GroES system forms a nano-cage that allows encapsulation of the non-native substrate proteins and provides a physical environment optimized to promote and accelerate protein folding. GroES binds to the apical surface of the GroEL ring, thereby capping the opening of the GroEL channel. The protein is Co-chaperonin GroES of Campylobacter lari (strain RM2100 / D67 / ATCC BAA-1060).